We begin with the raw amino-acid sequence, 306 residues long: D-alanine--D-alanine ligase B (306 aa).

Active-site residues include Glu15 and Ser150. The ATP-grasp domain maps to 101-303 (KLLWQGAGLP…FSQLVVRILE (203 aa)). Position 134-189 (134-189 (ISSLGLPVIVKPSREGSSVGMSKVVAENALQDALRLAFQHDEEVLIEKWLSGPEFT)) interacts with ATP. Mg(2+) contacts are provided by Asp257, Glu270, and Asn272. Residue Ser281 is part of the active site.

The protein belongs to the D-alanine--D-alanine ligase family. As to quaternary structure, monomer. It depends on Mg(2+) as a cofactor. Mn(2+) is required as a cofactor.

Its subcellular location is the cytoplasm. It carries out the reaction 2 D-alanine + ATP = D-alanyl-D-alanine + ADP + phosphate + H(+). It functions in the pathway cell wall biogenesis; peptidoglycan biosynthesis. Cell wall formation. The sequence is that of D-alanine--D-alanine ligase B from Escherichia coli O6:H1 (strain CFT073 / ATCC 700928 / UPEC).